We begin with the raw amino-acid sequence, 431 residues long: ETS domain-containing protein Elk-4 (431 aa).

A DNA-binding region (ETS) is located at residues 5-85 (ITLWQFLLQL…NGQKFVYKFV (81 aa)). Positions 114–139 (SSSSKDVENGGKDKPPQPGAKTSSRN) are disordered. The segment covering 118–128 (KDVENGGKDKP) has biased composition (basic and acidic residues). Residue lysine 167 forms a Glycyl lysine isopeptide (Lys-Gly) (interchain with G-Cter in SUMO2) linkage. Residue serine 180 is modified to Phosphoserine. Disordered stretches follow at residues 251 to 282 (TTPP…DTDI), 294 to 323 (ENLS…KKPK), and 411 to 431 (TLSG…LQKT). The segment covering 261–273 (LQEPPRTPSPPLS) has biased composition (pro residues). Residues 299-313 (EPKDQDSVLLEKDKV) are compositionally biased toward basic and acidic residues.

Belongs to the ETS family. As to quaternary structure, interacts with SIRT7.

The protein localises to the nucleus. Involved in both transcriptional activation and repression. Interaction with SIRT7 leads to recruitment and stabilization of SIRT7 at promoters, followed by deacetylation of histone H3 at 'Lys-18' (H3K18Ac) and subsequent transcription repression. Forms a ternary complex with the serum response factor (SRF). Requires DNA-bound SRF for ternary complex formation and makes extensive DNA contacts to the 5'side of SRF, but does not bind DNA autonomously. The chain is ETS domain-containing protein Elk-4 (ELK4) from Homo sapiens (Human).